The primary structure comprises 173 residues: Small ribosomal subunit protein uS5 (173 aa).

The S5 DRBM domain maps to Trp-17–Val-80.

The protein belongs to the universal ribosomal protein uS5 family. Part of the 30S ribosomal subunit. Contacts proteins S4 and S8.

In terms of biological role, with S4 and S12 plays an important role in translational accuracy. Its function is as follows. Located at the back of the 30S subunit body where it stabilizes the conformation of the head with respect to the body. In Synechocystis sp. (strain ATCC 27184 / PCC 6803 / Kazusa), this protein is Small ribosomal subunit protein uS5.